We begin with the raw amino-acid sequence, 433 residues long: Serine hydroxymethyltransferase (433 aa).

Position 121–123 (121–123 (AHV)) interacts with (6S)-5,6,7,8-tetrahydrofolate. Position 227 is an N6-(pyridoxal phosphate)lysine (K227). E243 is a binding site for (6S)-5,6,7,8-tetrahydrofolate.

This sequence belongs to the SHMT family. As to quaternary structure, homodimer. Pyridoxal 5'-phosphate is required as a cofactor.

The protein localises to the cytoplasm. The protein operates within amino-acid biosynthesis; glycine biosynthesis; glycine from L-serine: step 1/1. In terms of biological role, catalyzes the reversible interconversion of serine and glycine with a modified folate serving as the one-carbon carrier. Also exhibits a pteridine-independent aldolase activity toward beta-hydroxyamino acids, producing glycine and aldehydes, via a retro-aldol mechanism. This Saccharolobus islandicus (strain Y.N.15.51 / Yellowstone #2) (Sulfolobus islandicus) protein is Serine hydroxymethyltransferase.